The following is a 221-amino-acid chain: Orotate phosphoribosyltransferase (221 aa).

K26 lines the 5-phospho-alpha-D-ribose 1-diphosphate pocket. Residue 34–35 participates in orotate binding; that stretch reads FF. Residues 72-73, R98, K99, K102, H104, and 123-131 contribute to the 5-phospho-alpha-D-ribose 1-diphosphate site; these read YK and DDVISAGTS. S127 and R155 together coordinate orotate.

This sequence belongs to the purine/pyrimidine phosphoribosyltransferase family. PyrE subfamily. As to quaternary structure, homodimer. Mg(2+) is required as a cofactor.

The enzyme catalyses orotidine 5'-phosphate + diphosphate = orotate + 5-phospho-alpha-D-ribose 1-diphosphate. It participates in pyrimidine metabolism; UMP biosynthesis via de novo pathway; UMP from orotate: step 1/2. Its function is as follows. Catalyzes the transfer of a ribosyl phosphate group from 5-phosphoribose 1-diphosphate to orotate, leading to the formation of orotidine monophosphate (OMP). This Herminiimonas arsenicoxydans protein is Orotate phosphoribosyltransferase.